Reading from the N-terminus, the 614-residue chain is 1-deoxy-D-xylulose-5-phosphate synthase (614 aa).

Residues His74 and 115–117 contribute to the thiamine diphosphate site; that span reads AHS. Asp146 contacts Mg(2+). Thiamine diphosphate-binding positions include 147–148, Asn175, Tyr282, and Glu363; that span reads GA. Asn175 serves as a coordination point for Mg(2+).

This sequence belongs to the transketolase family. DXPS subfamily. As to quaternary structure, homodimer. It depends on Mg(2+) as a cofactor. Thiamine diphosphate serves as cofactor.

It catalyses the reaction D-glyceraldehyde 3-phosphate + pyruvate + H(+) = 1-deoxy-D-xylulose 5-phosphate + CO2. It functions in the pathway metabolic intermediate biosynthesis; 1-deoxy-D-xylulose 5-phosphate biosynthesis; 1-deoxy-D-xylulose 5-phosphate from D-glyceraldehyde 3-phosphate and pyruvate: step 1/1. Catalyzes the acyloin condensation reaction between C atoms 2 and 3 of pyruvate and glyceraldehyde 3-phosphate to yield 1-deoxy-D-xylulose-5-phosphate (DXP). The sequence is that of 1-deoxy-D-xylulose-5-phosphate synthase from Nitrosomonas eutropha (strain DSM 101675 / C91 / Nm57).